A 330-amino-acid chain; its full sequence is tRNA U34 carboxymethyltransferase (330 aa).

Residues Lys91, Trp105, Lys110, Gly130, 152–154 (DPS), 181–182 (IE), Met196, Tyr200, and Arg315 contribute to the carboxy-S-adenosyl-L-methionine site.

The protein belongs to the class I-like SAM-binding methyltransferase superfamily. CmoB family. Homotetramer.

The catalysed reaction is carboxy-S-adenosyl-L-methionine + 5-hydroxyuridine(34) in tRNA = 5-carboxymethoxyuridine(34) in tRNA + S-adenosyl-L-homocysteine + H(+). Its function is as follows. Catalyzes carboxymethyl transfer from carboxy-S-adenosyl-L-methionine (Cx-SAM) to 5-hydroxyuridine (ho5U) to form 5-carboxymethoxyuridine (cmo5U) at position 34 in tRNAs. The protein is tRNA U34 carboxymethyltransferase of Shewanella woodyi (strain ATCC 51908 / MS32).